A 419-amino-acid polypeptide reads, in one-letter code: MAPK/MAK/MRK overlapping kinase (419 aa).

The 282-residue stretch at Tyr4–Phe285 folds into the Protein kinase domain. Residues Ile10–Val18 and Lys33 contribute to the ATP site. Asp128 (proton acceptor) is an active-site residue. Disordered regions lie at residues Phe285–Ala344 and Pro390–Arg419. Basic and acidic residues-rich tracts occupy residues Lys322–Pro338 and Lys393–Lys402.

The protein belongs to the protein kinase superfamily. CMGC Ser/Thr protein kinase family. CDC2/CDKX subfamily. Mg(2+) serves as cofactor. Post-translationally, autophosphorylated. Expressed in heart, brain, lung, kidney, and pancreas, and at very low levels in placenta, liver and skeletal muscle. Detected in retina.

It is found in the cytoplasm. The protein localises to the cell projection. It localises to the cilium. The protein resides in the nucleus. It catalyses the reaction L-seryl-[protein] + ATP = O-phospho-L-seryl-[protein] + ADP + H(+). It carries out the reaction L-threonyl-[protein] + ATP = O-phospho-L-threonyl-[protein] + ADP + H(+). Its activity is regulated as follows. Phosphorylation appears to increase the enzymatic activity. In terms of biological role, able to phosphorylate several exogenous substrates and to undergo autophosphorylation. Negatively regulates cilium length in a cAMP and mTORC1 signaling-dependent manner. The chain is MAPK/MAK/MRK overlapping kinase (MOK) from Homo sapiens (Human).